Consider the following 105-residue polypeptide: V-type ATP synthase subunit F (105 aa).

Belongs to the V-ATPase F subunit family.

Its function is as follows. Produces ATP from ADP in the presence of a proton gradient across the membrane. In Fusobacterium nucleatum subsp. nucleatum (strain ATCC 25586 / DSM 15643 / BCRC 10681 / CIP 101130 / JCM 8532 / KCTC 2640 / LMG 13131 / VPI 4355), this protein is V-type ATP synthase subunit F.